Consider the following 553-residue polypeptide: Formate--tetrahydrofolate ligase (553 aa).

62–69 (TPAGEGKS) contacts ATP.

Belongs to the formate--tetrahydrofolate ligase family.

The enzyme catalyses (6S)-5,6,7,8-tetrahydrofolate + formate + ATP = (6R)-10-formyltetrahydrofolate + ADP + phosphate. It functions in the pathway one-carbon metabolism; tetrahydrofolate interconversion. This chain is Formate--tetrahydrofolate ligase, found in Pediococcus pentosaceus (strain ATCC 25745 / CCUG 21536 / LMG 10740 / 183-1w).